A 29-amino-acid chain; its full sequence is Trypsin inhibitor 5 (29 aa).

3 disulfides stabilise this stretch: cysteine 3–cysteine 20, cysteine 10–cysteine 22, and cysteine 16–cysteine 28.

Belongs to the protease inhibitor I7 (squash-type serine protease inhibitor) family.

Its subcellular location is the secreted. In terms of biological role, strongly inhibits trypsin, weakly inhibits chymotrypsin. In Cyclanthera pedata (Achocha), this protein is Trypsin inhibitor 5.